An 87-amino-acid chain; its full sequence is Lipid-anchored plasma membrane protein uvi15 (87 aa).

The tract at residues 1–64 is disordered; sequence MSAQQFYGDK…MYVQQPQASD (64 aa). Over residues 18 to 41 the composition is skewed to low complexity; that stretch reads QQAYGGPNYYPPQQNYPQQGYAPP.

This sequence belongs to the CYSTM1 family. In terms of processing, palmitoylated.

It localises to the cell membrane. The protein localises to the cell tip. Required for the maintenance of viability of cells in stationary phase and in starvation conditions. In Schizosaccharomyces pombe (strain 972 / ATCC 24843) (Fission yeast), this protein is Lipid-anchored plasma membrane protein uvi15 (uvi15).